An 809-amino-acid chain; its full sequence is Probable replication endonuclease from prophage-like region (809 aa).

Residues tyrosine 503 and tyrosine 507 each act as O-(5'-phospho-DNA)-tyrosine intermediate in the active site.

It belongs to the phage GPA family.

Possible endonuclease which induces a single-strand cut and initiates DNA replication. This chain is Probable replication endonuclease from prophage-like region, found in Salmonella typhimurium (strain LT2 / SGSC1412 / ATCC 700720).